Reading from the N-terminus, the 273-residue chain is Energy-coupling factor transporter ATP-binding protein EcfA (273 aa).

The region spanning 2 to 237 (ISIRDLTYFY…RASLLALGLA (236 aa)) is the ABC transporter domain. An ATP-binding site is contributed by 36–43 (GRNGSGKS).

Belongs to the ABC transporter superfamily. Energy-coupling factor EcfA family. As to quaternary structure, forms a stable energy-coupling factor (ECF) transporter complex composed of 2 membrane-embedded substrate-binding proteins (S component), 2 ATP-binding proteins (A component) and 2 transmembrane proteins (T component).

Its subcellular location is the cell membrane. Its function is as follows. ATP-binding (A) component of a common energy-coupling factor (ECF) ABC-transporter complex. Unlike classic ABC transporters this ECF transporter provides the energy necessary to transport a number of different substrates. The protein is Energy-coupling factor transporter ATP-binding protein EcfA of Syntrophomonas wolfei subsp. wolfei (strain DSM 2245B / Goettingen).